Consider the following 469-residue polypeptide: Sulfate adenylyltransferase subunit 1 (469 aa).

One can recognise a tr-type G domain in the interval 22–224 (KDLMRFITCG…NMTWYPGSPL (203 aa)). The segment at 31 to 38 (GSVDDGKS) is G1. A GTP-binding site is contributed by 31 to 38 (GSVDDGKS). The G2 stretch occupies residues 89–93 (GITID). The G3 stretch occupies residues 110–113 (DTPG). GTP-binding positions include 110–114 (DTPGH) and 165–168 (NKMD). The G4 stretch occupies residues 165–168 (NKMD). Residues 202-204 (SAL) form a G5 region.

The protein belongs to the TRAFAC class translation factor GTPase superfamily. Classic translation factor GTPase family. CysN/NodQ subfamily. Heterodimer composed of CysD, the smaller subunit, and CysN.

It carries out the reaction sulfate + ATP + H(+) = adenosine 5'-phosphosulfate + diphosphate. It participates in sulfur metabolism; hydrogen sulfide biosynthesis; sulfite from sulfate: step 1/3. In terms of biological role, with CysD forms the ATP sulfurylase (ATPS) that catalyzes the adenylation of sulfate producing adenosine 5'-phosphosulfate (APS) and diphosphate, the first enzymatic step in sulfur assimilation pathway. APS synthesis involves the formation of a high-energy phosphoric-sulfuric acid anhydride bond driven by GTP hydrolysis by CysN coupled to ATP hydrolysis by CysD. The protein is Sulfate adenylyltransferase subunit 1 of Psychromonas ingrahamii (strain DSM 17664 / CCUG 51855 / 37).